The chain runs to 264 residues: Secretory carrier-associated membrane protein 4 (264 aa).

Positions 1-33 (MNRHHDPNPFDEDEEIVNPFSKGGGRVPAASRP) are disordered. The Cytoplasmic portion of the chain corresponds to 1 to 122 (MNRHHDPNPF…AQKLQYLAFA (122 aa)). Positions 51–85 (MNDSSQKQRKLADWEAELRKKEMDIKRREEAIAKF) form a coiled coil. 4 helical membrane-spanning segments follow: residues 123 to 143 (SWLGIVLCLVFNVIATMVCWI), 150 to 170 (IFFLATIYALIGCPLSYVLWY), 185 to 205 (FGWFFFTYLIHIGFCIVAAIA), and 233 to 253 (IFYFIGFGLFCLESLLSLWVL). Topologically, residues 254–264 (QKIYLYFRGNK) are cytoplasmic.

It belongs to the SCAMP family.

Its subcellular location is the cell membrane. The protein localises to the cytoplasmic vesicle. It is found in the secretory vesicle membrane. Probably involved in membrane trafficking. This Arabidopsis thaliana (Mouse-ear cress) protein is Secretory carrier-associated membrane protein 4 (SCAMP4).